The chain runs to 222 residues: Small ribosomal subunit protein uS3 (222 aa).

Residues Ile39 to Lys108 enclose the KH type-2 domain.

It belongs to the universal ribosomal protein uS3 family. In terms of assembly, part of the 30S ribosomal subunit. Forms a tight complex with proteins S10 and S14.

Functionally, binds the lower part of the 30S subunit head. Binds mRNA in the 70S ribosome, positioning it for translation. The sequence is that of Small ribosomal subunit protein uS3 from Clostridium acetobutylicum (strain ATCC 824 / DSM 792 / JCM 1419 / IAM 19013 / LMG 5710 / NBRC 13948 / NRRL B-527 / VKM B-1787 / 2291 / W).